The primary structure comprises 217 residues: Putative 3-methyladenine DNA glycosylase (217 aa).

One can recognise an RPE2 insert domain in the interval 105–145; it reads SHNNVYTIDTAKIKSQITDEKTQSIIIRKNRRIMKFYIPNL.

The protein belongs to the DNA glycosylase MPG family.

The chain is Putative 3-methyladenine DNA glycosylase from Rickettsia prowazekii (strain Madrid E).